The primary structure comprises 350 residues: Probable L-aspartate decarboxylase (350 aa).

Lysine 206 is modified (N6-(pyridoxal phosphate)lysine).

Belongs to the group II decarboxylase family. MfnA subfamily. The cofactor is pyridoxal 5'-phosphate.

The enzyme catalyses L-aspartate + H(+) = beta-alanine + CO2. It participates in cofactor biosynthesis; coenzyme A biosynthesis. In terms of biological role, catalyzes the decarboxylation of L-aspartate to produce beta-alanine. This chain is Probable L-aspartate decarboxylase, found in Haloarcula marismortui (strain ATCC 43049 / DSM 3752 / JCM 8966 / VKM B-1809) (Halobacterium marismortui).